We begin with the raw amino-acid sequence, 239 residues long: Small ribosomal subunit protein uS2 (239 aa).

The protein belongs to the universal ribosomal protein uS2 family.

In Francisella tularensis subsp. novicida (strain U112), this protein is Small ribosomal subunit protein uS2.